The primary structure comprises 163 residues: MERFIFAALLVVALSLSGTGADPQCLPGWSSSDGYCYKVFKEYKRWDDAEMFCRQEVEGGHLVSIHSKTEAKFLARLVFRKFILLNVWIGLSSPGKHGIWRWSDGSSFYYTSWAFGEPNNFLWNEYCVGLMSITGHRKWSDQNCRSKRYFICKAQPQSEGSTW.

The N-terminal stretch at 1–21 is a signal peptide; the sequence is MERFIFAALLVVALSLSGTGA. Intrachain disulfides connect Cys25/Cys36, Cys53/Cys152, and Cys127/Cys144. The C-type lectin domain occupies 32 to 153; sequence SDGYCYKVFK…CRSKRYFICK (122 aa). Positions 117–119 match the Mannose-binding motif; the sequence is EPN. Ca(2+)-binding residues include Glu125 and Asp141.

This sequence belongs to the true venom lectin family. As to expression, expressed by the venom gland.

Its subcellular location is the secreted. Its function is as follows. Mannose-binding lectin which recognizes specific carbohydrate structures and agglutinates a variety of animal cells by binding to cell-surface glycoproteins and glycolipids. May be a calcium-dependent lectin. The protein is C-type lectin lectoxin-Lio2 of Erythrolamprus poecilogyrus (Water snake).